The following is an 872-amino-acid chain: F-box protein pof6 (872 aa).

The F-box domain occupies 30–75 (FGCLTINIYLKIFTLISTPDLCNCRLVCRKFQQLCDYNSIYVKKLL). Positions 101 to 122 (MSSNTSKGFHLQSSDKKYADSD) are disordered. The segment covering 113-122 (SSDKKYADSD) has biased composition (basic and acidic residues).

In terms of assembly, interacts with skp1. Forms a complex with pof6 and skp1.

It localises to the cytoplasm. Its subcellular location is the nucleus. Together with skp1, essential for septum processing and cell separation. The polypeptide is F-box protein pof6 (pof6) (Schizosaccharomyces pombe (strain 972 / ATCC 24843) (Fission yeast)).